A 418-amino-acid chain; its full sequence is MKAEIIAVGTEILTGQIVNTNAQFLSEKLAEIGVDVYFQTAVGDNEVRLLSLLEIASQRSSLVILTGGLGATEDDLTKQTLAKFLGKALVFDPQAQEKLDIFFALRPDYARTPNNERQVQIVEGAIPLPNETGLAVGGKLEVDGVTYVVLPGPPSELKPMVLNQLLPKLMTGSKLYSRVLRFFGIGESQLVTILADLIDNQIDPTLAPYAKTGEVTLRLSTKASSQEEANQALDILENQILDCQTFEGISLRDFCYGYGEETSLASIVVEELKRQGKTIAAAESLTAGLFQATVANFSGVSSIFEGGFVTYSLEEKSRMLDIPAKNLEEHGVVSEFTAQKMAEQARSKTQSDFGISLTGVAGPDSLEGHPVGTVFIGLAQDQGTEVIKVNIGGRSRADVRHIAVMHAFNLVRKALLSD.

Belongs to the CinA family.

This Streptococcus pneumoniae serotype 2 (strain D39 / NCTC 7466) protein is Putative competence-damage inducible protein.